A 179-amino-acid chain; its full sequence is ATP-dependent protease subunit HslV (179 aa).

Residue T7 is part of the active site. 3 residues coordinate Na(+): G162, C165, and T168.

The protein belongs to the peptidase T1B family. HslV subfamily. As to quaternary structure, a double ring-shaped homohexamer of HslV is capped on each side by a ring-shaped HslU homohexamer. The assembly of the HslU/HslV complex is dependent on binding of ATP.

It is found in the cytoplasm. The catalysed reaction is ATP-dependent cleavage of peptide bonds with broad specificity.. Its activity is regulated as follows. Allosterically activated by HslU binding. Protease subunit of a proteasome-like degradation complex believed to be a general protein degrading machinery. The protein is ATP-dependent protease subunit HslV of Aromatoleum aromaticum (strain DSM 19018 / LMG 30748 / EbN1) (Azoarcus sp. (strain EbN1)).